The sequence spans 426 residues: Serine--tRNA ligase (426 aa).

Residue 232–234 (TAE) participates in L-serine binding. 263 to 265 (RRE) is an ATP binding site. L-serine is bound at residue E286. 350–353 (EISS) is an ATP binding site. L-serine is bound at residue S385.

This sequence belongs to the class-II aminoacyl-tRNA synthetase family. Type-1 seryl-tRNA synthetase subfamily. As to quaternary structure, homodimer. The tRNA molecule binds across the dimer.

The protein localises to the cytoplasm. The enzyme catalyses tRNA(Ser) + L-serine + ATP = L-seryl-tRNA(Ser) + AMP + diphosphate + H(+). The catalysed reaction is tRNA(Sec) + L-serine + ATP = L-seryl-tRNA(Sec) + AMP + diphosphate + H(+). It participates in aminoacyl-tRNA biosynthesis; selenocysteinyl-tRNA(Sec) biosynthesis; L-seryl-tRNA(Sec) from L-serine and tRNA(Sec): step 1/1. Catalyzes the attachment of serine to tRNA(Ser). Is also able to aminoacylate tRNA(Sec) with serine, to form the misacylated tRNA L-seryl-tRNA(Sec), which will be further converted into selenocysteinyl-tRNA(Sec). The sequence is that of Serine--tRNA ligase from Fervidobacterium nodosum (strain ATCC 35602 / DSM 5306 / Rt17-B1).